The sequence spans 550 residues: Chaperonin GroEL (550 aa).

ATP is bound by residues 30–33 (TLGP), lysine 51, 87–91 (DGTTT), glycine 415, 479–481 (NAA), and aspartate 495.

The protein belongs to the chaperonin (HSP60) family. Forms a cylinder of 14 subunits composed of two heptameric rings stacked back-to-back. Interacts with the co-chaperonin GroES.

The protein resides in the cytoplasm. It carries out the reaction ATP + H2O + a folded polypeptide = ADP + phosphate + an unfolded polypeptide.. Together with its co-chaperonin GroES, plays an essential role in assisting protein folding. The GroEL-GroES system forms a nano-cage that allows encapsulation of the non-native substrate proteins and provides a physical environment optimized to promote and accelerate protein folding. This is Chaperonin GroEL from Polynucleobacter asymbioticus (strain DSM 18221 / CIP 109841 / QLW-P1DMWA-1) (Polynucleobacter necessarius subsp. asymbioticus).